A 512-amino-acid polypeptide reads, in one-letter code: SNF1-related protein kinase catalytic subunit alpha KIN11 (512 aa).

A Protein kinase domain is found at 20 to 272 (YKLGKTLGIG…IPEIRQHRWF (253 aa)). ATP contacts are provided by residues 26–34 (LGIGSFGKV) and Lys49. The active-site Proton acceptor is Asp143. A Phosphoserine modification is found at Ser165. Position 176 is a phosphothreonine; by GRIK1 or GRIK2 (Thr176). Residues 291–391 (AKKINEEIVQ…GARSQVPVDR (101 aa)) are auto-inhibitory domain (AID). The UBA domain occupies 293 to 333 (KINEEIVQEVVNMGFDRNQVLESLRNRTQNDATVTYYLLLD). The tract at residues 295-512 (NEEIVQEVVN…AAFLTELRVI (218 aa)) is regulatory domain (RD). The interval 392-512 (KWALGLQSHA…AAFLTELRVI (121 aa)) is PPI. Residues 399–512 (SHAHPREIMN…AAFLTELRVI (114 aa)) are interaction with PAD1 and SKP1. The KA1 domain occupies 463-511 (AMTSPTVIKFELQLYKAREEKYLLDIQRVNGPQFLFLDLCAAFLTELRV).

This sequence belongs to the protein kinase superfamily. CAMK Ser/Thr protein kinase family. SNF1 subfamily. In terms of assembly, subunit of a probable heterotrimeric complex consisting of an alpha catalytic (KIN10 or KIN11) subunit, and a beta (KINB) and a gamma (KING or SNF4) non-catalytic regulatory subunits. Interacts with KINB2, KINB3, SNF4 and probably with KINB1 and KING1. Interacts with SKP1/ASK1, PAD1 and the N-terminus of PRL1. Potential subunit of a SCF ubiquitin ligase complex consisting of a SNF1-related protein kinase, SKP1 and CUL1. The association of the SCF complex with the proteasome may be mediated by PAD1 and seems to be inhibited by the interaction with PRL1. Interacts with DSP4. Interacts with the begomovirus AL2 protein and the curtovirus L2 protein. Interacts with ATAF1. Interacts with CIPK14. Interacts with FLZ proteins through their FLZ-type zinc finger domains. Interacts with GEBP/STKR1. Interacts with REM4.1 and REM4.2. Interacts with ADK2. Interacts with IDD8. Interacts with FLZ3, FLZ9, TCP3, TCP13, HB21/ZHD3 and HB23/ZHD10. Interacts with WRI1. Interacts with IPK2b. Interacts with FLZ6 and FLZ10. Sumoylated by SIZ1. In terms of processing, phosphorylated at Thr-176 under submergence. Autophosphorylated. Phosphorylated at Thr-176 by GRIK1/SNAK2 and GRIK2/SNAK1. As to expression, expressed in roots, shoots, flower buds, flowers, siliques and leaves. Restrictly expressed to the base of the leaf, the vascular tissue, and the hydathodes.

Its subcellular location is the plastid. The protein localises to the chloroplast. It is found in the cytoplasm. The protein resides in the endoplasmic reticulum. The enzyme catalyses L-seryl-[protein] + ATP = O-phospho-L-seryl-[protein] + ADP + H(+). The catalysed reaction is L-threonyl-[protein] + ATP = O-phospho-L-threonyl-[protein] + ADP + H(+). With respect to regulation, inactivated by the begomovirus AL2 protein or the curtovirus L2 protein. Activated by phosphorylation at Thr-176 by GRIK1/SNAK2 and GRIK2/SNAK1. Inhibited by trehalose-6-phosphate. Catalytic subunit of the probable trimeric SNF1-related protein kinase (SnRK) complex, a central regulator of cellular energy homeostasis, which, in response to seemingly unrelated darkness, sugar and stress conditions, activates energy-producing pathways and inhibits energy-consuming processes. May play a role in a signal transduction cascade regulating gene expression and carbohydrate metabolism in higher plants. The SnRK complex may also be involved in the regulation of fatty acid synthesis by phosphorylation of acetyl-CoA carboxylase and in assimilation of nitrogen by phosphorylating nitrate reductase. In vitro, KIN11 exhibits kinase activity on sucrose phosphate synthase and the kinase activity is inhibited by PRL1. May be a subunit of a SCF ubiquitin ligase complex and thus be involved in proteasomal ubiquitination. Involved in innate antiviral defenses. Phosphorylates REM4.1 in vitro. Phosphorylates ADK2 in vitro. This chain is SNF1-related protein kinase catalytic subunit alpha KIN11, found in Arabidopsis thaliana (Mouse-ear cress).